A 333-amino-acid chain; its full sequence is Glycerol-3-phosphate dehydrogenase [NAD(P)+] (333 aa).

Trp11, Arg34, and Lys107 together coordinate NADPH. Lys107, Gly136, and Ser138 together coordinate sn-glycerol 3-phosphate. Ala140 lines the NADPH pocket. Sn-glycerol 3-phosphate-binding residues include Lys191, Asp244, Ser254, Arg255, and Asn256. The active-site Proton acceptor is the Lys191. Position 255 (Arg255) interacts with NADPH. Residues Ile279 and Glu281 each contribute to the NADPH site.

This sequence belongs to the NAD-dependent glycerol-3-phosphate dehydrogenase family.

Its subcellular location is the cytoplasm. It carries out the reaction sn-glycerol 3-phosphate + NAD(+) = dihydroxyacetone phosphate + NADH + H(+). The catalysed reaction is sn-glycerol 3-phosphate + NADP(+) = dihydroxyacetone phosphate + NADPH + H(+). Its pathway is membrane lipid metabolism; glycerophospholipid metabolism. Functionally, catalyzes the reduction of the glycolytic intermediate dihydroxyacetone phosphate (DHAP) to sn-glycerol 3-phosphate (G3P), the key precursor for phospholipid synthesis. This Nitrosospira multiformis (strain ATCC 25196 / NCIMB 11849 / C 71) protein is Glycerol-3-phosphate dehydrogenase [NAD(P)+].